The primary structure comprises 378 residues: Putative monoglyceride lipase (378 aa).

The GXSXG signature appears at 97–101; it reads GHSMG. Serine 99 serves as the catalytic Nucleophile. Active-site charge relay system residues include aspartate 219 and histidine 249. Positions 276 to 292 are enriched in basic and acidic residues; it reads PSETVKSEQETAVEHPK. The segment at 276–350 is disordered; that stretch reads PSETVKSEQE…TSESTTVPET (75 aa). A compositionally biased stretch (low complexity) spans 293 to 305; that stretch reads PTATTSAPSASPT. Serine 301 is subject to Phosphoserine. Residues 341 to 350 are compositionally biased toward polar residues; the sequence is TSESTTVPET.

This sequence belongs to the AB hydrolase superfamily. Monoacylglycerol lipase family.

It is found in the lipid droplet. It localises to the cytoplasm. The protein resides in the endoplasmic reticulum. The protein localises to the mitochondrion outer membrane. The catalysed reaction is Hydrolyzes glycerol monoesters of long-chain fatty acids.. It participates in glycerolipid metabolism; triacylglycerol degradation. Its function is as follows. Converts monoacylglycerides (MAG) to free fatty acids and glycerol. Has a strong preference for monounsaturated monoglycerides. Required for efficient degradation of MAG, short-lived intermediates of glycerolipid metabolism which may also function as lipid signaling molecules. Controls inactivation of the signaling lipid N-palmitoylethanolamine (PEA). Involved in fatty acid ethyl ester (FAEE) catabolism. FAEEs are non-oxidative metabolites of ethanol that are transiently incorporated into lipid droplets (LDs). Their mobilization by LD-resident FAEE hydrolases facilitates a controlled metabolism of these potentially toxic lipid metabolites. This chain is Putative monoglyceride lipase (mgl1), found in Schizosaccharomyces pombe (strain 972 / ATCC 24843) (Fission yeast).